A 134-amino-acid chain; its full sequence is MSVMLQSLNNIRTLRAMAREFSIDVLEEMLEKFRVVTKERREEEEQQQRELAERQEKISTWLELMKADGINPEELLGNSSAAAPRAGKKRQPRPAKYKFTDVNGETKTWTGQGRTPKPIAQALAEGKSLDDFLI.

Residues 73 to 94 are disordered; it reads EELLGNSSAAAPRAGKKRQPRP. Residues 112–117 mediate DNA binding; that stretch reads QGRTPK.

Belongs to the histone-like protein H-NS family. Forms homodimers, can interact with H-NS. May interact with Hha and/or Cnu.

It is found in the cytoplasm. It localises to the nucleoid. In terms of biological role, a DNA-binding protein that acts in a fashion similar to H-NS, repressing gene transcription. A subset of H-NS/StpA-regulated genes require auxillary proteins for repression; these auxillary proteins (Hha and other similar proteins) may also modulate oligomerization of the H-NS/StpA complex. This Escherichia coli O157:H7 protein is DNA-binding protein StpA (stpA).